The chain runs to 575 residues: 5-aminolevulinate synthase, mitochondrial (575 aa).

The transit peptide at 1-55 (MESITRVSMSVCPFVKSSSAQALRQLSKNSALTSQARQCPFMGAALNAKESTRSY) directs the protein to the mitochondrion. The substrate site is built by R124, S237, and K256. S289, H317, and T361 together coordinate pyridoxal 5'-phosphate. The active site involves K364. K364 carries the N6-(pyridoxal phosphate)lysine modification. Pyridoxal 5'-phosphate is bound by residues T393 and T394. T479 provides a ligand contact to substrate.

This sequence belongs to the class-II pyridoxal-phosphate-dependent aminotransferase family. As to quaternary structure, homodimer. Pyridoxal 5'-phosphate serves as cofactor.

It is found in the mitochondrion matrix. The enzyme catalyses succinyl-CoA + glycine + H(+) = 5-aminolevulinate + CO2 + CoA. The protein operates within porphyrin-containing compound metabolism; protoporphyrin-IX biosynthesis; 5-aminolevulinate from glycine: step 1/1. Catalyzes the synthesis of 5-aminolevulinate (ALA) from succinyl-CoA and glycine, the first and rate-limiting step in heme biosynthesis. The chain is 5-aminolevulinate synthase, mitochondrial (HEM1) from Debaryomyces hansenii (strain ATCC 36239 / CBS 767 / BCRC 21394 / JCM 1990 / NBRC 0083 / IGC 2968) (Yeast).